Here is a 962-residue protein sequence, read N- to C-terminus: Atromentin synthetase nps3 (962 aa).

Positions Phe-55–Val-469 are adenylation (A) domain. Residues Val-601–Val-679 enclose the Carrier domain. A thiolation and peptide carrier (T) domain region spans residues Thr-606–Asp-676. Residue Ser-638 is modified to O-(pantetheine 4'-phosphoryl)serine. Positions Pro-702–Ile-805 are thioesterase (TE) domain.

This sequence belongs to the ATP-dependent AMP-binding enzyme family.

It functions in the pathway secondary metabolite biosynthesis. An L-tyrosine:2-oxoglutarate aminotransferase (probably amt1) and atromentin synthetase nps3 catalyze consecutive steps to turn over L-tyrosine into atromentin, which represents the generic precursor molecule for the entire terphenylquinone and pulvinic acid family of pigments, which are widely distributed secondary metabolites in homobasidiomycetes. The first step catalyzed by the aminotransferase converts L-tyrosine in to 4-hydroxyphenylpyruvate (4-HPP). Adenylation of two 4-HPP monomers by the nps3 adenylation (A) domain, covalent tethering of the monomers as a thioester and oxoester onto the nps3 thiolation (T) and thioesterase (TE) domains, respectively, and symmetric C-C-bond formation between two monomers catalyzed by the nps3 TE domain leads to atromentin. Follow-up products of atromentin in S.lacrymans include atromentic acid, xerocomic acid, isoxerocomic acid and variegatic acid. This is Atromentin synthetase nps3 (nps3) from Serpula lacrymans var. lacrymans (strain S7.9) (Dry rot fungus).